The primary structure comprises 105 residues: uncharacterized protein (105 aa).

Residues 25–47 traverse the membrane as a helical segment; the sequence is AHSVTLLFGIFRSSPFLLLFLLI. The segment at 54–89 is disordered; it reads GRGSQRMKKKRGRANPSENLRERADPTNGPAENGKK.

Its subcellular location is the membrane. This is an uncharacterized protein from Saccharomyces cerevisiae (strain ATCC 204508 / S288c) (Baker's yeast).